The primary structure comprises 175 residues: Large ribosomal subunit protein uL18 (175 aa).

This sequence belongs to the universal ribosomal protein uL18 family. As to quaternary structure, part of the 50S ribosomal subunit. Contacts the 5S and 23S rRNAs.

Its function is as follows. This is one of the proteins that bind and probably mediate the attachment of the 5S RNA into the large ribosomal subunit, where it forms part of the central protuberance. The chain is Large ribosomal subunit protein uL18 from Methanospirillum hungatei JF-1 (strain ATCC 27890 / DSM 864 / NBRC 100397 / JF-1).